We begin with the raw amino-acid sequence, 259 residues long: Phosphate import ATP-binding protein PstB (259 aa).

One can recognise an ABC transporter domain in the interval 11 to 254; sequence AESKNLNFYY…PDNPRTEDYI (244 aa). An ATP-binding site is contributed by 43–50; sequence GPSGCGKS.

This sequence belongs to the ABC transporter superfamily. Phosphate importer (TC 3.A.1.7) family. As to quaternary structure, the complex is composed of two ATP-binding proteins (PstB), two transmembrane proteins (PstC and PstA) and a solute-binding protein (PstS).

It localises to the cell inner membrane. The enzyme catalyses phosphate(out) + ATP + H2O = ADP + 2 phosphate(in) + H(+). In terms of biological role, part of the ABC transporter complex PstSACB involved in phosphate import. Responsible for energy coupling to the transport system. The chain is Phosphate import ATP-binding protein PstB from Geobacter sulfurreducens (strain ATCC 51573 / DSM 12127 / PCA).